The primary structure comprises 487 residues: Histamine H1 receptor (487 aa).

The Extracellular portion of the chain corresponds to 1–29; that stretch reads MSLPNSSCLLEDKMCESNKTTMASPQLMP. N5 and N18 each carry an N-linked (GlcNAc...) asparagine glycan. The chain crosses the membrane as a helical span at residues 30-50; it reads LVVVLSTICLVTVGLNLLVLY. Over 51–64 the chain is Cytoplasmic; that stretch reads AVRSERKLHTVGNL. Residues 65 to 89 traverse the membrane as a helical segment; the sequence is YIVSLSVADLIVGAVVMPMNILYLL. Residues 90–97 are Extracellular-facing; sequence MSKWSLGR. Residues 98–123 form a helical membrane-spanning segment; that stretch reads PLCLFWLSMDYVASTASIFSVFILCI. C100 and C180 form a disulfide bridge. D107 and T112 together coordinate histamine. The interval 107-112 is important for agonist binding; that stretch reads DYVAST. At 124–144 the chain is on the cytoplasmic side; the sequence is DRYRSVQQPLRYLKYRTKTRA. 2 positions are modified to phosphothreonine: T140 and T142. Residues 145 to 164 form a helical membrane-spanning segment; that stretch reads SATILGAWFLSFLWVIPILG. At 165-188 the chain is on the extracellular side; it reads WNHFMQQTSVRREDKCETDFYDVT. The chain crosses the membrane as a helical span at residues 189–211; the sequence is WFKVMTAIINFYLPTLLMLWFYA. N198 is a binding site for histamine. The Cytoplasmic portion of the chain corresponds to 212 to 416; it reads KIYKAVRQHC…MNRERKAAKQ (205 aa). A Phosphoserine modification is found at S230. Positions 238 to 261 are enriched in basic and acidic residues; it reads KLRPENPKGDAKKPGKESPWEVLK. Positions 238 to 292 are disordered; the sequence is KLRPENPKGDAKKPGKESPWEVLKRKPKDAGGGSVLKSPSQTPKEMKSPVVFSQE. T279 carries the post-translational modification Phosphothreonine. A phosphoserine mark is found at S344 and S347. A disordered region spans residues 345–377; sequence EISEDQMLGDSQSFSRTDSDTTTETASGKGKLR. The segment covering 353–370 has biased composition (polar residues); sequence GDSQSFSRTDSDTTTETA. Phosphoserine occurs at positions 380, 396, and 398. The helical transmembrane segment at 417–440 threads the bilayer; the sequence is LGFIMAAFILCWIPYFIFFMVIAF. An important for agonist binding region spans residues 424–428; that stretch reads FILCW. Y431 is a histamine binding site. Residues C441 and C444 are joined by a disulfide bond. Residues 441–446 lie on the Extracellular side of the membrane; the sequence is CKNCCN. The chain crosses the membrane as a helical span at residues 447–469; it reads EHLHMFTIWLGYINSTLNPLIYP. Over 470-487 the chain is Cytoplasmic; that stretch reads LCNENFKKTFKRILHIRS.

It belongs to the G-protein coupled receptor 1 family. In terms of processing, phosphorylation at sites in the second and third cytoplasmic loops independently contribute to agonist-induced receptor down-regulation.

Its subcellular location is the cell membrane. G-protein-coupled receptor for histamine, a biogenic amine that functions as an immune modulator and a neurotransmitter. Through the H1 receptor, histamine mediates the contraction of smooth muscles and increases capillary permeability due to contraction of terminal venules. Also mediates neurotransmission in the central nervous system and thereby regulates circadian rhythms, emotional and locomotor activities as well as cognitive functions. This chain is Histamine H1 receptor, found in Gorilla gorilla gorilla (Western lowland gorilla).